A 448-amino-acid chain; its full sequence is Na(+)-translocating NADH-quinone reductase subunit A (448 aa).

It belongs to the NqrA family. In terms of assembly, composed of six subunits; NqrA, NqrB, NqrC, NqrD, NqrE and NqrF.

The enzyme catalyses a ubiquinone + n Na(+)(in) + NADH + H(+) = a ubiquinol + n Na(+)(out) + NAD(+). Its function is as follows. NQR complex catalyzes the reduction of ubiquinone-1 to ubiquinol by two successive reactions, coupled with the transport of Na(+) ions from the cytoplasm to the periplasm. NqrA to NqrE are probably involved in the second step, the conversion of ubisemiquinone to ubiquinol. This is Na(+)-translocating NADH-quinone reductase subunit A from Glaesserella parasuis serovar 5 (strain SH0165) (Haemophilus parasuis).